The following is a 123-amino-acid chain: Large ribosomal subunit protein bL12 (123 aa).

This sequence belongs to the bacterial ribosomal protein bL12 family. Homodimer. Part of the ribosomal stalk of the 50S ribosomal subunit. Forms a multimeric L10(L12)X complex, where L10 forms an elongated spine to which 2 to 4 L12 dimers bind in a sequential fashion. Binds GTP-bound translation factors.

Forms part of the ribosomal stalk which helps the ribosome interact with GTP-bound translation factors. Is thus essential for accurate translation. The protein is Large ribosomal subunit protein bL12 of Salmonella arizonae (strain ATCC BAA-731 / CDC346-86 / RSK2980).